The following is a 685-amino-acid chain: E3 ubiquitin-protein ligase RNF6 (685 aa).

3 stretches are compositionally biased toward basic and acidic residues: residues 1 to 10 (MNQSRSRSDG), 17 to 29 (PQDH…ERRW), and 88 to 107 (DLRD…SSHE). Disordered stretches follow at residues 1–29 (MNQS…ERRW), 81–107 (EQLA…SSHE), 121–142 (GNAT…RTNP), 168–273 (DYTD…REGQ), 286–345 (RSNV…RRRG), and 499–576 (EADS…NPNN). Polar residues-rich tracts occupy residues 199–213 (SQTS…SNIP), 250–264 (ASRT…QSGG), and 286–297 (RSNVTVRNTNQR). Positions 303-313 (LRSTSNSRSRS) are enriched in low complexity. 2 stretches are compositionally biased toward polar residues: residues 314–325 (PIQRQSGTVYHN) and 519–528 (ELSNLGTDNN). An RING-type zinc finger spans residues 632-673 (CSVCISDYVTGNKLRQLPCMHEFHIHCIDRWLSENCTCPICR).

Belongs to the RNF12 family. In terms of tissue distribution, weakly expressed in peripheral blood, spleen, prostate, testis and ovary. According to a report, it is preferentially expressed in testis and ovary and hardly detected in other tissues.

The protein localises to the nucleus. The protein resides in the cytoplasm. It is found in the cell projection. Its subcellular location is the axon. It localises to the PML body. It catalyses the reaction S-ubiquitinyl-[E2 ubiquitin-conjugating enzyme]-L-cysteine + [acceptor protein]-L-lysine = [E2 ubiquitin-conjugating enzyme]-L-cysteine + N(6)-ubiquitinyl-[acceptor protein]-L-lysine.. It functions in the pathway protein modification; protein ubiquitination. Its function is as follows. E3 ubiquitin-protein ligase mediating 'Lys-48'-linked polyubiquitination of LIMK1 and its subsequent targeting to the proteasome for degradation. Negatively regulates axonal outgrowth through regulation of the LIMK1 turnover. Mediates 'Lys-6' and 'Lys-27'-linked polyubiquitination of AR/androgen receptor thereby modulating its transcriptional activity. May also bind DNA and function as a transcriptional regulator. Mediates polyubiquitination of QKI in macrophages, leading to its degradation. This Homo sapiens (Human) protein is E3 ubiquitin-protein ligase RNF6.